Here is a 370-residue protein sequence, read N- to C-terminus: Putative agmatine deiminase (370 aa).

The active-site Amidino-cysteine intermediate is Cys361.

This sequence belongs to the agmatine deiminase family.

It carries out the reaction agmatine + H2O = N-carbamoylputrescine + NH4(+). This Shewanella sp. (strain MR-4) protein is Putative agmatine deiminase.